The following is a 604-amino-acid chain: Siderophore iron transporter mirB (604 aa).

A disordered region spans residues 1–61; it reads MTIGSKFSLL…DNSSDEALPS (61 aa). 14 consecutive transmembrane segments (helical) span residues 73 to 95, 115 to 137, 149 to 168, 178 to 200, 207 to 224, 237 to 259, 289 to 311, 326 to 343, 363 to 385, 400 to 422, 427 to 449, 454 to 476, 489 to 511, and 566 to 588; these read AVTL…LVTL, FQSH…ALYI, AEGW…MMAA, ADVF…AADI, GIAF…AFAG, WRWG…YFVL, YFFA…FLLP, YIIA…LFVL, TVLG…NSYF, AGYV…GFAI, YFRW…MIHF, QYIG…FVLL, YVAA…GNAI, and AQAR…MFMV.

Belongs to the major facilitator superfamily.

The protein localises to the membrane. Involved in the transport of siderophore triacestylfusarinine C and so has a role in iron homeostasis. This Emericella nidulans (strain FGSC A4 / ATCC 38163 / CBS 112.46 / NRRL 194 / M139) (Aspergillus nidulans) protein is Siderophore iron transporter mirB (mirB).